A 150-amino-acid polypeptide reads, in one-letter code: Small ribosomal subunit protein uS13 (150 aa).

Belongs to the universal ribosomal protein uS13 family. In terms of assembly, part of the 30S ribosomal subunit. Forms a loose heterodimer with protein S19. Forms two bridges to the 50S subunit in the 70S ribosome.

In terms of biological role, located at the top of the head of the 30S subunit, it contacts several helices of the 16S rRNA. In the 70S ribosome it contacts the 23S rRNA (bridge B1a) and protein L5 of the 50S subunit (bridge B1b), connecting the 2 subunits; these bridges are implicated in subunit movement. This is Small ribosomal subunit protein uS13 from Methanocorpusculum labreanum (strain ATCC 43576 / DSM 4855 / Z).